We begin with the raw amino-acid sequence, 148 residues long: Azurin (148 aa).

The signal sequence occupies residues 1–20 (MLRKLAAVSLLSLLSAPLLA). In terms of domain architecture, Plastocyanin-like spans 21 to 148 (AECSVDIQGN…ALMKGTLTLK (128 aa)). The cysteines at positions 23 and 46 are disulfide-linked. Residues His66, Cys132, His137, and Met141 each coordinate Cu cation.

It is found in the periplasm. Transfers electrons from cytochrome c551 to cytochrome oxidase. This is Azurin (azu) from Pseudomonas aeruginosa (strain ATCC 15692 / DSM 22644 / CIP 104116 / JCM 14847 / LMG 12228 / 1C / PRS 101 / PAO1).